The following is a 357-amino-acid chain: Red-sensitive opsin (357 aa).

At 1–49 the chain is on the extracellular side; it reads MGDQWGDAVFAARRRGDDTTREAAFTYTNSNNTKDPFEGPNYHIAPRWV. A glycan (N-linked (GlcNAc...) asparagine) is linked at asparagine 31. Residues 50 to 74 form a helical membrane-spanning segment; the sequence is YNLATCWMFFVVVASTVTNGLVLVA. The Cytoplasmic segment spans residues 75-86; the sequence is SAKFKKLRHPLN. Residues 87–112 traverse the membrane as a helical segment; the sequence is WILVNLAIADLLETLLASTISVCNQF. Residues 113-126 are Extracellular-facing; the sequence is FGYFILGHPMCVFE. An intrachain disulfide couples cysteine 123 to cysteine 200. A helical membrane pass occupies residues 127-146; the sequence is GFTVATCGIAGLWSLTVISW. The Cytoplasmic segment spans residues 147–165; it reads ERWVVVCKPFGNVKFDGKM. A helical transmembrane segment spans residues 166–189; sequence ATAGIVFTWVWSAVWCAPPIFGWS. The Extracellular portion of the chain corresponds to 190 to 215; that stretch reads RYWPHGLKTSCGPDVFSGSEDPGVQS. A helical transmembrane segment spans residues 216–243; it reads YMIVLMITCCFIPLGIIILCYIAVWWAI. Residues 244 to 265 lie on the Cytoplasmic side of the membrane; that stretch reads RTVAQQQKDSESTQKAEKEVSR. Residues 266–289 form a helical membrane-spanning segment; sequence MVVVMIMAYCFCWGPYTFFACFAA. Residues 290 to 297 lie on the Extracellular side of the membrane; that stretch reads ANPGYAFH. Residues 298–322 traverse the membrane as a helical segment; the sequence is PLAAAMPAYFAKSATIYNPVIYVFM. Lysine 309 carries the N6-(retinylidene)lysine modification. Residues 323–357 are Cytoplasmic-facing; sequence NRQFRVCIMQLFGKKVDDGSEVSTSKTEVSSVAPA.

It belongs to the G-protein coupled receptor 1 family. Opsin subfamily. Phosphorylated on some or all of the serine and threonine residues present in the C-terminal region. In terms of tissue distribution, the color pigments are found in the cone photoreceptor cells.

It localises to the membrane. Its function is as follows. Visual pigments are the light-absorbing molecules that mediate vision. They consist of an apoprotein, opsin, covalently linked to cis-retinal. In Psalidodon fasciatus (Banded astyanax), this protein is Red-sensitive opsin (R007).